The following is a 131-amino-acid chain: Large ribosomal subunit protein uL22 (131 aa).

It belongs to the universal ribosomal protein uL22 family. In terms of assembly, part of the 50S ribosomal subunit.

This protein binds specifically to 23S rRNA; its binding is stimulated by other ribosomal proteins, e.g. L4, L17, and L20. It is important during the early stages of 50S assembly. It makes multiple contacts with different domains of the 23S rRNA in the assembled 50S subunit and ribosome. In terms of biological role, the globular domain of the protein is located near the polypeptide exit tunnel on the outside of the subunit, while an extended beta-hairpin is found that lines the wall of the exit tunnel in the center of the 70S ribosome. The polypeptide is Large ribosomal subunit protein uL22 (Phytoplasma mali (strain AT)).